The following is a 60-amino-acid chain: Large ribosomal subunit protein bL32 (60 aa).

Over residues 1–16 the composition is skewed to basic residues; that stretch reads MAVPRNRHSNARKNIR. Residues 1–20 are disordered; that stretch reads MAVPRNRHSNARKNIRRSHD.

This sequence belongs to the bacterial ribosomal protein bL32 family.

The sequence is that of Large ribosomal subunit protein bL32 (rpmF) from Chlamydia pneumoniae (Chlamydophila pneumoniae).